Consider the following 225-residue polypeptide: UPF0758 protein Sez_1052 (225 aa).

The region spanning 102-224 is the MPN domain; it reads PVLSSAQVAE…YYSFREKSDL (123 aa). Residues His-173, His-175, and Asp-186 each contribute to the Zn(2+) site. Positions 173 to 186 match the JAMM motif motif; it reads HNHPSGLTKPSAND.

This sequence belongs to the UPF0758 family.

The chain is UPF0758 protein Sez_1052 from Streptococcus equi subsp. zooepidemicus (strain MGCS10565).